Here is a 124-residue protein sequence, read N- to C-terminus: Small ribosomal subunit protein uS12 (124 aa).

Residues 1–24 (MPTINQLVRRPRKPSVSANKAPAL) form a disordered region. Residue D90 is modified to 3-methylthioaspartic acid.

The protein belongs to the universal ribosomal protein uS12 family. As to quaternary structure, part of the 30S ribosomal subunit. Contacts proteins S8 and S17. May interact with IF1 in the 30S initiation complex.

Its function is as follows. With S4 and S5 plays an important role in translational accuracy. Functionally, interacts with and stabilizes bases of the 16S rRNA that are involved in tRNA selection in the A site and with the mRNA backbone. Located at the interface of the 30S and 50S subunits, it traverses the body of the 30S subunit contacting proteins on the other side and probably holding the rRNA structure together. The combined cluster of proteins S8, S12 and S17 appears to hold together the shoulder and platform of the 30S subunit. In Anaplasma phagocytophilum (strain HZ), this protein is Small ribosomal subunit protein uS12.